We begin with the raw amino-acid sequence, 176 residues long: Dual-action ribosomal maturation protein DarP (176 aa).

Positions 1-10 are enriched in polar residues; it reads MTVPNHQQDI. The disordered stretch occupies residues 1 to 22; that stretch reads MTVPNHQQDISDSDLESRPSKT.

The protein belongs to the DarP family.

The protein localises to the cytoplasm. In terms of biological role, member of a network of 50S ribosomal subunit biogenesis factors which assembles along the 30S-50S interface, preventing incorrect 23S rRNA structures from forming. Promotes peptidyl transferase center (PTC) maturation. The sequence is that of Dual-action ribosomal maturation protein DarP from Nitrosomonas eutropha (strain DSM 101675 / C91 / Nm57).